Here is a 98-residue protein sequence, read N- to C-terminus: MARQKLDRKEIENGLSELDEWELAEGGNAIHRRFVFSNFNEAFGFMTRAALAAEKLDHHPEWTNVYKTVDVTLTTHASGGLTELDFKLAKKMNAYAAK.

The protein belongs to the pterin-4-alpha-carbinolamine dehydratase family.

The catalysed reaction is (4aS,6R)-4a-hydroxy-L-erythro-5,6,7,8-tetrahydrobiopterin = (6R)-L-erythro-6,7-dihydrobiopterin + H2O. This Chelativorans sp. (strain BNC1) protein is Putative pterin-4-alpha-carbinolamine dehydratase.